A 1075-amino-acid polypeptide reads, in one-letter code: Putative type I restriction enzyme MjaVIIP endonuclease subunit (1075 aa).

This sequence belongs to the HsdR family. The type I restriction/modification system is composed of three polypeptides R, M and S.

The catalysed reaction is Endonucleolytic cleavage of DNA to give random double-stranded fragments with terminal 5'-phosphates, ATP is simultaneously hydrolyzed.. In terms of biological role, the restriction (R) subunit of a type I restriction enzyme that recognizes 5'-CAAN(7)TGG-3' and cleaves a random distance away. The R subunit is required for both endonuclease and ATPase activities but not for modification. After locating a non-methylated recognition site, the enzyme complex serves as a molecular motor that translocates DNA in an ATP-dependent manner until a collision occurs that triggers cleavage. The sequence is that of Putative type I restriction enzyme MjaVIIP endonuclease subunit from Methanocaldococcus jannaschii (strain ATCC 43067 / DSM 2661 / JAL-1 / JCM 10045 / NBRC 100440) (Methanococcus jannaschii).